A 1285-amino-acid chain; its full sequence is Tat-binding homolog 7 (1285 aa).

4 disordered regions span residues 1 to 95 (MARS…LTYR), 121 to 173 (MSDD…RTRR), 224 to 243 (GREEEEEGDEEEAESGEKEQ), and 258 to 359 (QEDE…ERGR). Acidic residues-rich tracts occupy residues 226–237 (EEEEEGDEEEAE) and 258–270 (QEDEESSNAESSE). The span at 311-325 (NRHHRNRNTSNRRRR) shows a compositional bias: basic residues. Residue 446-453 (GPPGTGKT) coordinates ATP. The Bromo domain occupies 928–1032 (ALQRQMRMFF…NTFRDAIDDM (105 aa)). The disordered stretch occupies residues 1100–1196 (EKLKEKLGIS…PTIQSSSSQE (97 aa)). The segment covering 1136–1149 (KLNKKKKDQKRNKK) has biased composition (basic residues). The segment covering 1155-1175 (PDGDDTEETEEAVAENNVDAD) has biased composition (acidic residues).

The protein belongs to the AAA ATPase family.

In terms of biological role, thought to form a complex that enhances transcription from repetitive DNA sequences by modulating chromatin structure. The protein is Tat-binding homolog 7 of Caenorhabditis briggsae.